Here is a 163-residue protein sequence, read N- to C-terminus: MIDYIIIGIIAFSILVSLLRGFVREVLSLGSWIVAFIVASQFYPYLAAYLTQIESMYIRNGTAIAILFVLTLIVGAIVNYVISQLVDKTGLSGTDRVLGAAFGLVRGALIVAALLFFMDTFTNFEQTDWWKESQLIPHFGFIIEWFFQQLQASSSFLTPTLNQ.

Transmembrane regions (helical) follow at residues 2–22 (IDYI…LRGF), 26–46 (VLSL…YPYL), 62–82 (TAIA…NYVI), and 97–117 (VLGA…LLFF).

The protein to E.coli CvpA.

It is found in the cell membrane. This chain is Colicin V production protein homolog (cvpA), found in Haemophilus influenzae (strain ATCC 51907 / DSM 11121 / KW20 / Rd).